The sequence spans 346 residues: N-acetyl-gamma-glutamyl-phosphate reductase (346 aa).

Residue C149 is part of the active site.

It belongs to the NAGSA dehydrogenase family. Type 1 subfamily.

The protein resides in the cytoplasm. It carries out the reaction N-acetyl-L-glutamate 5-semialdehyde + phosphate + NADP(+) = N-acetyl-L-glutamyl 5-phosphate + NADPH + H(+). It functions in the pathway amino-acid biosynthesis; L-arginine biosynthesis; N(2)-acetyl-L-ornithine from L-glutamate: step 3/4. Functionally, catalyzes the NADPH-dependent reduction of N-acetyl-5-glutamyl phosphate to yield N-acetyl-L-glutamate 5-semialdehyde. The sequence is that of N-acetyl-gamma-glutamyl-phosphate reductase from Geotalea daltonii (strain DSM 22248 / JCM 15807 / FRC-32) (Geobacter daltonii).